A 491-amino-acid chain; its full sequence is MSRSTCKVLYVSGEISPFIRVSALADFMASFPHAMEEEGCEARIMMPKYGVINDRKFRLHDVLRLSDIEVRSKEKTDLLHVKVTALPSSKIQTYFLYNEKYFKRNALFADMQQGSDVKNSLERVVFFNLGVLETLQRLGWKPDIIHCQDWYAGLVPLLLKTMYADCEFFKDIRTVLTVHNAYRQGIYPLKGFKKMLPSEVIDKMHVEDDTVNMLFTAVEHFDAVTTTSDAYAGMLADGRSEAFGLDRVIEKRASGLVGIANGLDAKQWNPAADKMIKKKFDIERLSEKTENKKYLLEEFGMELEEATPLVGSVINAERFQGSELLMESIDGLMELDIQLVVSVSGDKELIRRLQEKAKAYPEKLAVYSEFSDAIFHQIMASSDLLLIPAEVESCGMMQLFAIAYGSVPVVYTAGGNIETIEEIAGDKNGSAFVFHEYSVESLLATFEDALHTYADGERWERIVTGNMVRDLTWKNSAAKYNELYQGVRGGE.

An ADP-alpha-D-glucose-binding site is contributed by R20.

It belongs to the glycosyltransferase 1 family. Bacterial/plant glycogen synthase subfamily.

The enzyme catalyses [(1-&gt;4)-alpha-D-glucosyl](n) + ADP-alpha-D-glucose = [(1-&gt;4)-alpha-D-glucosyl](n+1) + ADP + H(+). Its pathway is glycan biosynthesis; glycogen biosynthesis. In terms of biological role, synthesizes alpha-1,4-glucan chains using ADP-glucose. The protein is Glycogen synthase of Prosthecochloris aestuarii (strain DSM 271 / SK 413).